The following is a 208-amino-acid chain: 23 kDa protein (208 aa).

The polypeptide is 23 kDa protein (Pea early browning virus).